The following is a 335-amino-acid chain: Eukaryotic translation initiation factor 3 subunit I (335 aa).

WD repeat units follow at residues 8-47, 50-91, 145-184, 189-228, and 286-325; these read GHER…RLGT, GHQG…KTWD, CAES…LLFN, EPDL…VMKT, and GHFG…FDFT.

This sequence belongs to the eIF-3 subunit I family. In terms of assembly, component of the eukaryotic translation initiation factor 3 (eIF-3) complex.

It is found in the cytoplasm. Component of the eukaryotic translation initiation factor 3 (eIF-3) complex, which is involved in protein synthesis of a specialized repertoire of mRNAs and, together with other initiation factors, stimulates binding of mRNA and methionyl-tRNAi to the 40S ribosome. The eIF-3 complex specifically targets and initiates translation of a subset of mRNAs involved in cell proliferation. The chain is Eukaryotic translation initiation factor 3 subunit I (tif34) from Botryotinia fuckeliana (strain B05.10) (Noble rot fungus).